We begin with the raw amino-acid sequence, 263 residues long: Malonyl-[acyl-carrier protein] O-methyltransferase (263 aa).

Belongs to the methyltransferase superfamily.

It carries out the reaction malonyl-[ACP] + S-adenosyl-L-methionine = malonyl-[ACP] methyl ester + S-adenosyl-L-homocysteine. Its pathway is cofactor biosynthesis; biotin biosynthesis. Functionally, converts the free carboxyl group of a malonyl-thioester to its methyl ester by transfer of a methyl group from S-adenosyl-L-methionine (SAM). It allows to synthesize pimeloyl-ACP via the fatty acid synthetic pathway. This chain is Malonyl-[acyl-carrier protein] O-methyltransferase, found in Chlorobium luteolum (strain DSM 273 / BCRC 81028 / 2530) (Pelodictyon luteolum).